Here is a 99-residue protein sequence, read N- to C-terminus: Protein dpy-30 homolog (99 aa).

M1 bears the N-acetylmethionine mark. The disordered stretch occupies residues M1–N26. At S19 the chain carries Phosphoserine. Position 35 is an N6-acetyllysine; alternate (K35). Residue K35 forms a Glycyl lysine isopeptide (Lys-Gly) (interchain with G-Cter in SUMO2); alternate linkage.

It belongs to the dpy-30 family. In terms of assembly, homodimer. Core component of several methyltransferase-containing complexes including MLL1/MLL, MLL2/3 (also named ASCOM complex) and MLL4/WBP7. Each complex is at least composed of ASH2L, RBBP5, WDR5, DPY30, one or more specific histone methyltransferases (KMT2A/MLL1, KMT2D/MLL2, KMT2C/MLL3 and KMT2B/MLL4), and the facultative components MEN1, HCFC1, HCFC2, NCOA6, KDM6A, PAXIP1/PTIP, PAGR1 and alpha- and beta-tubulin. Interacts with ASH2L; the interaction is direct. Interacts with ARFGEF1. Component of the SET1 complex, at least composed of the catalytic subunit (SETD1A or SETD1B), WDR5, WDR82, RBBP5, ASH2L/ASH2, CXXC1/CFP1, HCFC1 and DPY30.

The protein resides in the nucleus. It localises to the golgi apparatus. It is found in the trans-Golgi network. Functionally, as part of the MLL1/MLL complex, involved in the methylation of histone H3 at 'Lys-4', particularly trimethylation. Histone H3 'Lys-4' methylation represents a specific tag for epigenetic transcriptional activation. May play some role in histone H3 acetylation. In embryonic stem cells, may play a crucial role in retinoic acid-induced differentiation along the neural lineage, regulating gene induction and H3 'Lys-4' methylation at key developmental loci. May also play an indirect or direct role in endosomal transport. The polypeptide is Protein dpy-30 homolog (DPY30) (Bos taurus (Bovine)).